Consider the following 467-residue polypeptide: MSSILPFTPPVVKRLLGWKKSAGGSGGAGGGEQNGQEEKWCEKAVKSLVKKLKKTGRLDELEKAITTQNCNTKCVTIPSTCSEIWGLSTANTVDQWDTTGLYSFSEQTRSLDGRLQVSHRKGLPHVIYCRLWRWPDLHSHHELKAIENCEYAFNLKKDEVCVNPYHYQRVETPVLPPVLVPRHTEILTELPPLDDYTHSIPENTNFPAGIEPQSNYIPETPPPGYISEDGETSDQQLNQSMDTGSPAELSPTTLSPVNHSLDLQPVTYSEPAFWCSIAYYELNQRVGETFHASQPSLTVDGFTDPSNSERFCLGLLSNVNRNATVEMTRRHIGRGVRLYYIGGEVFAECLSDSAIFVQSPNCNQRYGWHPATVCKIPPGCNLKIFNNQEFAALLAQSVNQGFEAVYQLTRMCTIRMSFVKGWGAEYRRQTVTSTPCWIELHLNGPLQWLDKVLTQMGSPSVRCSSMS.

S2 carries the N-acetylserine modification. T8 is modified (phosphothreonine). Positions 10 to 176 constitute an MH1 domain; it reads PVVKRLLGWK…YQRVETPVLP (167 aa). The residue at position 19 (K19) is an N6-acetyllysine. Residues C74, C149, C161, and H166 each contribute to the Zn(2+) site. A compositionally biased stretch (polar residues) spans 207–217; it reads PAGIEPQSNYI. The segment at 207–251 is disordered; that stretch reads PAGIEPQSNYIPETPPPGYISEDGETSDQQLNQSMDTGSPAELSP. At T220 the chain carries Phosphothreonine. Positions 221-225 match the PY-motif motif; the sequence is PPPGY. A compositionally biased stretch (polar residues) spans 233–243; it reads SDQQLNQSMDT. A Phosphoserine; by CAMK2 modification is found at S240. 6 positions are modified to phosphoserine: S245, S250, S255, S458, S460, and S464. The MH2 domain occupies 274–467; that stretch reads WCSIAYYELN…SPSVRCSSMS (194 aa). S465 and S467 each carry phosphoserine; by TGFBR1.

It belongs to the dwarfin/SMAD family. In terms of assembly, monomer; in the absence of TGF-beta. Heterodimer; in the presence of TGF-beta. Forms a heterodimer with co-SMAD, SMAD4, in the nucleus to form the transactivation complex SMAD2/SMAD4. Found in a complex with SMAD3 and TRIM33 upon addition of TGF-beta. Identified in a complex that contains at least ZNF451, SMAD2, SMAD3 and SMAD4. Interacts (via the MH2 domain) with ZFYVE9; may form trimers with the SMAD4 co-SMAD. Interacts with TAZ/WWRT1. Interacts with FOXH1. Interacts with SNW1. Interacts with CREB-binding protein (CBP) and EP300. Interacts with SNON. Interacts with ALK4/ACVR1B. Interacts with SKOR1. Interacts with SKOR2. Interacts with PRDM16. Interacts (via MH2 domain) with LEMD3. Interacts with RBPMS. Interacts with WWP1. Interacts (dephosphorylated form, via the MH1 and MH2 domains) with RANBP3 (via its C-terminal R domain); the interaction results in the export of dephosphorylated SMAD3 out of the nucleus and termination of the TGF-beta signaling. Interacts with PDPK1 (via PH domain). Interacts with DAB2; the interactions are enhanced upon TGF-beta stimulation. Interacts with USP15. Interacts with PPP5C. Interacts with LDLRAD4 (via the SMAD interaction motif). Interacts (via MH2 domain) with PMEPA1 (via the SMAD interaction motif). Interacts with ZFHX3. Interacts with ZNF451. Interacts with SMURF2 when phosphorylated on Ser-465/467. Interacts with PPM1A. Interacts with TGF-beta. Interacts with TGFBR1. Interacts with TGIF. Interacts with SMAD3 and TRIM33. Interacts with ZNF580. Interacts with NEDD4L in response to TGF-beta. Interacts with HGS. Interacts with AIP1. Interacts with WWP1. Interacts with PML. Interacts weakly with ZNF8. Interacts (when phosphorylated) with RNF111; RNF111 acts as an enhancer of the transcriptional responses by mediating ubiquitination and degradation of SMAD2 inhibitors. Interacts with YAP1 (when phosphorylated at 'Ser-112'). Interacts when phosphorylated with IPO7; the interaction facilitates translocation of SMAD2 to the nucleus. Interacts with MTMR4; negatively regulates TGF-beta signaling through SMAD2 dephosphorylation and retention in endosomes. Post-translationally, in response to TGF-beta, phosphorylated on the C-terminal SXS motif by TGF-beta and activin type 1 receptor kinases, phosphorylation declines progressively in a KMT5A-dependent manner. Phosphorylation in this motif is required for interaction with a number of proteins including SMURF2, SNON and SMAD4 in response to TGF-beta. Dephosphorylated in this motif by PPM1A leading to disruption of the SMAD2/3-SMAD4 complex, nuclear export and termination of the TGF-beta signaling. In response to decorin, the naturally occurring inhibitor of TGF-beta signaling, phosphorylated on Ser-240 by CaMK2. Phosphorylated by MAPK3 upon EGF stimulation; which increases transcriptional activity and stability, and is blocked by calmodulin. Phosphorylated by PDPK1. In terms of processing, in response to TGF-beta, ubiquitinated by NEDD4L; which promotes its degradation. Monoubiquitinated, leading to prevent DNA-binding. Deubiquitination by USP15 alleviates inhibition and promotes activation of TGF-beta target genes. Ubiquitinated by RNF111, leading to its degradation: only SMAD2 proteins that are 'in use' are targeted by RNF111, RNF111 playing a key role in activating SMAD2 and regulating its turnover. Acetylated on Lys-19 by coactivators in response to TGF-beta signaling, which increases transcriptional activity.

Its subcellular location is the cytoplasm. The protein resides in the nucleus. Its function is as follows. Receptor-regulated SMAD (R-SMAD) that is an intracellular signal transducer and transcriptional modulator activated by TGF-beta (transforming growth factor) and activin type 1 receptor kinases. Binds the TRE element in the promoter region of many genes that are regulated by TGF-beta and, on formation of the SMAD2/SMAD4 complex, activates transcription. Promotes TGFB1-mediated transcription of odontoblastic differentiation genes in dental papilla cells. Positively regulates PDPK1 kinase activity by stimulating its dissociation from the 14-3-3 protein YWHAQ which acts as a negative regulator. The polypeptide is Mothers against decapentaplegic homolog 2 (Smad2) (Mus musculus (Mouse)).